A 406-amino-acid chain; its full sequence is COP9 signalosome complex subunit 4 (406 aa).

A2 bears the N-acetylalanine mark. At K25 the chain carries N6-acetyllysine. Residues 197–366 (YRRKFIEAAQ…GIVHFETREA (170 aa)) enclose the PCI domain.

Belongs to the CSN4 family. As to quaternary structure, component of the CSN complex, composed of COPS1/GPS1, COPS2, COPS3, COPS4, COPS5, COPS6, COPS7 (COPS7A or COPS7B), COPS8 and COPS9 isoform 1. In the complex, it probably interacts directly with COPS1, COPS2, COPS3, COPS5, COPS6, COPS7 (COPS7A or COPS7B) and COPS8. Interacts with TOR1A; the interaction is direct and associates TOR1A and SNAPIN with the CSN complex. Interacts with STON2; controls STON2 neddylation levels. Interacts with ERCC6.

Its subcellular location is the cytoplasm. It is found in the nucleus. The protein resides in the cytoplasmic vesicle. It localises to the secretory vesicle. The protein localises to the synaptic vesicle. Its function is as follows. Component of the COP9 signalosome complex (CSN), a complex involved in various cellular and developmental processes. The CSN complex is an essential regulator of the ubiquitin (Ubl) conjugation pathway by mediating the deneddylation of the cullin subunits of SCF-type E3 ligase complexes, leading to decrease the Ubl ligase activity of SCF-type complexes such as SCF, CSA or DDB2. Also involved in the deneddylation of non-cullin subunits such as STON2. The complex is also involved in phosphorylation of p53/TP53, c-jun/JUN, IkappaBalpha/NFKBIA, ITPK1, IRF8/ICSBP and SNAPIN, possibly via its association with CK2 and PKD kinases. CSN-dependent phosphorylation of TP53 and JUN promotes and protects degradation by the Ubl system, respectively. The polypeptide is COP9 signalosome complex subunit 4 (COPS4) (Homo sapiens (Human)).